We begin with the raw amino-acid sequence, 560 residues long: Dihydroxy-acid dehydratase (560 aa).

C52 is a binding site for [2Fe-2S] cluster. D84 lines the Mg(2+) pocket. Residue C125 coordinates [2Fe-2S] cluster. D126 and K127 together coordinate Mg(2+). The residue at position 127 (K127) is an N6-carboxylysine. C197 lines the [2Fe-2S] cluster pocket. A Mg(2+)-binding site is contributed by E448. The Proton acceptor role is filled by S474.

It belongs to the IlvD/Edd family. Homodimer. Requires [2Fe-2S] cluster as cofactor. Mg(2+) serves as cofactor.

It catalyses the reaction (2R)-2,3-dihydroxy-3-methylbutanoate = 3-methyl-2-oxobutanoate + H2O. The enzyme catalyses (2R,3R)-2,3-dihydroxy-3-methylpentanoate = (S)-3-methyl-2-oxopentanoate + H2O. Its pathway is amino-acid biosynthesis; L-isoleucine biosynthesis; L-isoleucine from 2-oxobutanoate: step 3/4. It functions in the pathway amino-acid biosynthesis; L-valine biosynthesis; L-valine from pyruvate: step 3/4. Functions in the biosynthesis of branched-chain amino acids. Catalyzes the dehydration of (2R,3R)-2,3-dihydroxy-3-methylpentanoate (2,3-dihydroxy-3-methylvalerate) into 2-oxo-3-methylpentanoate (2-oxo-3-methylvalerate) and of (2R)-2,3-dihydroxy-3-methylbutanoate (2,3-dihydroxyisovalerate) into 2-oxo-3-methylbutanoate (2-oxoisovalerate), the penultimate precursor to L-isoleucine and L-valine, respectively. This chain is Dihydroxy-acid dehydratase, found in Leptospira borgpetersenii serovar Hardjo-bovis (strain JB197).